The primary structure comprises 119 residues: Ribonuclease P protein component (119 aa).

Belongs to the RnpA family. In terms of assembly, consists of a catalytic RNA component (M1 or rnpB) and a protein subunit.

The catalysed reaction is Endonucleolytic cleavage of RNA, removing 5'-extranucleotides from tRNA precursor.. RNaseP catalyzes the removal of the 5'-leader sequence from pre-tRNA to produce the mature 5'-terminus. It can also cleave other RNA substrates such as 4.5S RNA. The protein component plays an auxiliary but essential role in vivo by binding to the 5'-leader sequence and broadening the substrate specificity of the ribozyme. The protein is Ribonuclease P protein component of Mycolicibacterium paratuberculosis (strain ATCC BAA-968 / K-10) (Mycobacterium paratuberculosis).